A 301-amino-acid polypeptide reads, in one-letter code: Probable tRNA pseudouridine synthase B (301 aa).

The active-site Nucleophile is Asp54. Residues 227 to 301 form the PUA domain; that stretch reads LPRLTIADSA…VVVALERVLV (75 aa).

This sequence belongs to the pseudouridine synthase TruB family. Type 2 subfamily.

It carries out the reaction uridine(55) in tRNA = pseudouridine(55) in tRNA. Could be responsible for synthesis of pseudouridine from uracil-55 in the psi GC loop of transfer RNAs. The chain is Probable tRNA pseudouridine synthase B from Halobacterium salinarum (strain ATCC 29341 / DSM 671 / R1).